A 642-amino-acid polypeptide reads, in one-letter code: Tigger transposable element derived 5 (642 aa).

A disordered region spans residues 1–54; that stretch reads MYPASPSAGPALHPVPHRARLPRPRCLAEPPRSPAPGPGSTARPPPPAPGPRPR. Residues 31-52 show a composition bias toward pro residues; that stretch reads PRSPAPGPGSTARPPPPAPGPR. The region spanning 56 to 107 is the HTH psq-type domain; that stretch reads AVKMTFRKAYSIKDKLQAIERVKGGERQASVCRDFGVPGGTLRGWLKDEPKL. 2 consecutive DNA-binding regions (H-T-H motif) follow at residues 83–103 and 154–187; these read QASV…WLKD and PVIQ…WQKR. An HTH CENPB-type domain is found at 121 to 194; the sequence is QRKKMRLANE…QKRHGISSQR (74 aa). A compositionally biased stretch (low complexity) spans 198–208; it reads EAEPPVAGPAP. The segment at 198–230 is disordered; that stretch reads EAEPPVAGPAPVKEEPAQPSSAGLLLDGTPATL. Positions 239–364 constitute a DDE-1 domain; the sequence is DEQIYNANVT…CLQQKAVLLV (126 aa). The tract at residues 543–583 is disordered; that stretch reads GLPEGCGEEVAPAAPPSPASLPSSIGAGEEEEEEATEQGGV.

Belongs to the tigger transposable element derived protein family.

The protein localises to the nucleus. This chain is Tigger transposable element derived 5 (Tigd5), found in Rattus norvegicus (Rat).